Consider the following 318-residue polypeptide: Thymidylate synthase (318 aa).

Residues Arg25 and 180–181 (RR) contribute to the dUMP site. Cys200 acts as the Nucleophile in catalysis. Residues 220–223 (RSGD), Asn231, and 261–263 (HIY) contribute to the dUMP site. Asp223 lines the (6R)-5,10-methylene-5,6,7,8-tetrahydrofolate pocket. Ala317 contributes to the (6R)-5,10-methylene-5,6,7,8-tetrahydrofolate binding site.

It belongs to the thymidylate synthase family. Bacterial-type ThyA subfamily. As to quaternary structure, homodimer.

The protein resides in the cytoplasm. The enzyme catalyses dUMP + (6R)-5,10-methylene-5,6,7,8-tetrahydrofolate = 7,8-dihydrofolate + dTMP. Its pathway is pyrimidine metabolism; dTTP biosynthesis. In terms of biological role, catalyzes the reductive methylation of 2'-deoxyuridine-5'-monophosphate (dUMP) to 2'-deoxythymidine-5'-monophosphate (dTMP) while utilizing 5,10-methylenetetrahydrofolate (mTHF) as the methyl donor and reductant in the reaction, yielding dihydrofolate (DHF) as a by-product. This enzymatic reaction provides an intracellular de novo source of dTMP, an essential precursor for DNA biosynthesis. This Bacillus cereus (strain ATCC 14579 / DSM 31 / CCUG 7414 / JCM 2152 / NBRC 15305 / NCIMB 9373 / NCTC 2599 / NRRL B-3711) protein is Thymidylate synthase.